The primary structure comprises 318 residues: Putative S-adenosyl-L-methionine-dependent methyltransferase MMAR_1595 (318 aa).

Residues glutamate 132 and 161–162 (DL) contribute to the S-adenosyl-L-methionine site.

It belongs to the UPF0677 family.

In terms of biological role, exhibits S-adenosyl-L-methionine-dependent methyltransferase activity. This chain is Putative S-adenosyl-L-methionine-dependent methyltransferase MMAR_1595, found in Mycobacterium marinum (strain ATCC BAA-535 / M).